The sequence spans 158 residues: WYSSMFAANIKQEPISHHNHHHHHHHGHHQHQQRHNSNSNASSPHQSPLPNLQLEQYLKQQQQQPLMPPGLPNPMQTIMPANMRPSPTARTTTTTAAAAPTTTAAAIAMQANDKLQALTPPMDVTPPKSPAKTQQSCAEPEKEHDLMSNSSEDMKYMA.

Over residues 18 to 34 (HNHHHHHHHGHHQHQQR) the composition is skewed to basic residues. Disordered regions lie at residues 18–96 (HNHH…TTTA) and 118–158 (LTPP…KYMA). Over residues 41 to 50 (ASSPHQSPLP) the composition is skewed to polar residues. Over residues 52–65 (LQLEQYLKQQQQQP) the composition is skewed to low complexity. Positions 139–158 (EPEKEHDLMSNSSEDMKYMA) are enriched in basic and acidic residues.

Belongs to the hunchback C2H2-type zinc-finger protein family.

The protein resides in the nucleus. Its function is as follows. Gap class segmentation protein that controls development of head structures. The chain is Protein hunchback (hb) from Drosophila mimica (Fruit fly).